We begin with the raw amino-acid sequence, 114 residues long: uncharacterized protein (114 aa).

To E.coli YggL.

This is an uncharacterized protein from Haemophilus influenzae (strain ATCC 51907 / DSM 11121 / KW20 / Rd).